Here is a 413-residue protein sequence, read N- to C-terminus: MNKSYLYSFFFHGSLVKRISVGLLLGLLLALIAPSLQGVLGFNLAEKAGFLGKIFVRSLRAVAPILVFLLVISAIANKQLGTKSNMKSIVVLYLLGTFLAALTSVLFSFALPTEIALKTQEGSLSPPNEVSEVLSTLVLNVVDNPINALFNANFIGILFWAIGLGIALRYASDTTKNVMNDFSEAVSRIVHFIISFAPIGVFGLVAETLTDKGLGALLDYMQLLVVLIGSMLFTAFVINPILVFWKIRRNPYPLVWTCVRESGLTAFLTRSSAANIPVNMELSKRLKLDEETYSVSIPLGANINMAGAAITITVLTLAAVHTLGIEVSFPTAVLLSVVASICACGASGVAGGSLLLIPLACSLFGIPNDIAAQVIGVGFVIGVLQDSTETALNSSTDVIFTAAVCWSEENKNS.

9 helical membrane passes run 22 to 42, 61 to 81, 89 to 109, 148 to 168, 189 to 209, 224 to 244, 305 to 325, 337 to 357, and 363 to 383; these read GLLL…VLGF, AVAP…KQLG, IVVL…LFSF, ALFN…GIAL, IVHF…AETL, LVVL…ILVF, MAGA…TLGI, VVAS…LLLI, and LFGI…VIGV.

It belongs to the dicarboxylate/amino acid:cation symporter (DAACS) (TC 2.A.23) family.

The protein resides in the cell inner membrane. The catalysed reaction is L-serine(in) + Na(+)(in) = L-serine(out) + Na(+)(out). It catalyses the reaction L-threonine(in) + Na(+)(in) = L-threonine(out) + Na(+)(out). Functionally, involved in the import of serine and threonine into the cell, with the concomitant import of sodium (symport system). This chain is Serine/threonine transporter SstT, found in Histophilus somni (strain 129Pt) (Haemophilus somnus).